Reading from the N-terminus, the 335-residue chain is dTDP-glucose 4,6-dehydratase (335 aa).

NAD(+) is bound by residues 11 to 12 (FI), 38 to 41 (DKLT), 61 to 62 (DI), 81 to 85 (FAAET), and T100. T85 lines the substrate pocket. T125 lines the substrate pocket. Residue D126 is the Proton donor of the active site. Active-site proton acceptor residues include E127 and Y149. 149-153 (YSASK) contacts NAD(+). Residue N178 participates in substrate binding. An NAD(+)-binding site is contributed by N179. Substrate is bound by residues 188–189 (KI), 204–206 (PLY), R213, N248, and 271–275 (DRKGH).

This sequence belongs to the NAD(P)-dependent epimerase/dehydratase family. dTDP-glucose dehydratase subfamily. NAD(+) is required as a cofactor.

The catalysed reaction is dTDP-alpha-D-glucose = dTDP-4-dehydro-6-deoxy-alpha-D-glucose + H2O. Its pathway is antibiotic biosynthesis. In terms of biological role, involved in the biosynthesis of the two 2,6-deoxysugars, dTDP-L-oleandrose and dTDP-D-desosamine, attached to the macrolactone ring oleandolide to produce the aglycone antibiotic oleandomycin. Catalyzes the dehydration of dTDP-D-glucose to form dTDP-6-deoxy-D-xylo-4-hexulose via a three-step process involving oxidation, dehydration and reduction. The chain is dTDP-glucose 4,6-dehydratase from Streptomyces antibioticus.